The chain runs to 263 residues: Achaete-scute homolog 2 (263 aa).

Disordered regions lie at residues arginine 104 to arginine 126 and proline 194 to proline 248. 3 stretches are compositionally biased toward low complexity: residues alanine 110–alanine 121, proline 202–proline 220, and serine 230–serine 247. One can recognise a bHLH domain in the interval alanine 118–leucine 170.

Efficient DNA binding requires dimerization with another basic helix-loop-helix (bHLH) protein. Forms heterodimers with bHLH transcription factor TCF3. May not heterodimerise with bHLH protein HAND1. As to expression, expressed in follicular T-helper (Tfh) cells.

The protein resides in the nucleus. Transcription factor. Binds to E-box motifs 5'-CANNTG-3' in the regulatory elements of target genes, probably as a heterodimer with another basic helix-loop-helix (bHLH) protein such as the transcription factor TCF3. May bind both open and closed chromatin, acting as a pioneer transcription factor to allow other factors to bind and activate lineage-specific genes. Required during post-implantation development for the generation of some differentiated trophoblast cell types. Transcriptional activity of ASCL2 may be antagonised in a subset of trophoblast cells by bHLH transcription factor HAND1, perhaps by competing for dimerization with other bHLH proteins. Involved in differentiation and function of follicular T-helper (Tfh) cells, thereby playing a role in germinal center responses; probably modulates expression of genes involved in Tfh cell function, such as BCL6. May also act as a suppressor of Th1-, Th2- and Th17-cell differentiation. Induces the formation of stem cells in intestinal crypts in vitro, synergistically activating transcription of target genes, such as SOX9, together with TCF4/beta-catenin. May form a bistable transcriptional switch, controlling expression of its own gene together with Wnt/R-spondin signaling, and thereby maintaining stem cell characteristics. Modulates expression of target genes, including perhaps down-regulating EGR1/Krox24 and chemokine CXCL10/Mob-1 and up-regulating CXCR4 and CDKN1C/p57kip2, in Schwann cells. May play a role in reducing proliferation of Schwann cells, perhaps acting via modulation of expression of CDKN1C. May be dispensable for blastocyst formation and later embryonic function. May be involved in the determination of neuronal precursors. This chain is Achaete-scute homolog 2 (Ascl2), found in Mus musculus (Mouse).